We begin with the raw amino-acid sequence, 304 residues long: MLKRRHVLSMKDFSREEIDEILETAESLEPYARGKGSDILEGKILALMFFEPSTRTRMSFETAMKRLGGKTINLGSAEASSIAKGESLADTIRVVGGYADAIVIRHPKEGSARLAAEFSPVPVLNAGDGAGHHPTQTLLDLYTIKKESHLDDLSIALVGDLKYGRTVHSLAYALSLYGADIYLVSPPTLRMPEQIIGDLSRMGTRVREVSDLREVIKEVDVLYITRIQRERFPDPVEYNRVARSYSITIRDLEGVKPELRIMHPLPRVDEISPSVDETEHAVYFRQSFYGVPVRMALLKMILED.

R55 and T56 together coordinate carbamoyl phosphate. K84 is an L-aspartate binding site. Residues R105, H133, and Q136 each contribute to the carbamoyl phosphate site. L-aspartate contacts are provided by R165 and R226. Carbamoyl phosphate contacts are provided by L265 and P266.

Belongs to the aspartate/ornithine carbamoyltransferase superfamily. ATCase family. Heterooligomer of catalytic and regulatory chains.

It carries out the reaction carbamoyl phosphate + L-aspartate = N-carbamoyl-L-aspartate + phosphate + H(+). The protein operates within pyrimidine metabolism; UMP biosynthesis via de novo pathway; (S)-dihydroorotate from bicarbonate: step 2/3. Catalyzes the condensation of carbamoyl phosphate and aspartate to form carbamoyl aspartate and inorganic phosphate, the committed step in the de novo pyrimidine nucleotide biosynthesis pathway. This is Aspartate carbamoyltransferase catalytic subunit from Methanothrix thermoacetophila (strain DSM 6194 / JCM 14653 / NBRC 101360 / PT) (Methanosaeta thermophila).